Reading from the N-terminus, the 271-residue chain is Ferric vulnibactin reductase VuuB (271 aa).

The region spanning 8–131 (VYPMLLDFVR…IGPAGPDPLI (124 aa)) is the FAD-binding FR-type domain.

Belongs to the SIP oxidoreductase family. In terms of assembly, monomer. Requires FAD as cofactor.

It is found in the cytoplasm. The catalysed reaction is 2 a Fe(II)-siderophore + NAD(+) + H(+) = 2 a Fe(III)-siderophore + NADH. Functionally, ferric-siderophore reductase involved in iron removal from the siderophores after their transport into the cell. Acts as a major ferric-vulnibactin reductase catalyzing the reduction of Fe(3+)-vulnibactin, a catecholate siderophore synthesized by V.vulnificus. Catalyzes reduction of Fe(3+)-aerobactin, a citrate-hydroxamate siderophore produced by other bacteria, in the absence of IutB. Catalyzes reduction of Fe(3+)-vibriobactin in vitro. No activity with ferrioxamine B or Fe(3+)-enterobactin. Catalyzes reduction of ferric chelating compounds Fe(3+)-nitrilotriacetic acid (NTA), Fe(3+)-citrate and Fe(3+)-EDTA as well as non-complexed FeCl3 in the presence of NADH as its electron donor and FAD as its cofactor in vitro. Highest activity with Fe(3+)-NTA as electron acceptor. The sequence is that of Ferric vulnibactin reductase VuuB from Vibrio vulnificus.